Here is a 504-residue protein sequence, read N- to C-terminus: Sperm motility kinase 2A (504 aa).

The Protein kinase domain occupies 28-276 (YEMLGTIGHG…VAEVMMHPWV (249 aa)). ATP is bound by residues 34–42 (IGHGGSTKV) and Lys-57. Asp-147 functions as the Proton acceptor in the catalytic mechanism. One can recognise a UBA domain in the interval 294-334 (KPDPAIVKAMGHIGFQAQDIEDSLRQRKFNETMASYCLLKK). 2 stretches are compositionally biased toward polar residues: residues 376-393 (PTSL…CGRS) and 443-454 (SDESTEGHTSAS). 2 disordered regions span residues 376–403 (PTSL…RSFS) and 443–469 (SDES…PRGI).

It belongs to the protein kinase superfamily. CAMK Ser/Thr protein kinase family. Smok subfamily. As to expression, testis-specific. Expressed in the testis from 22 days postpartum (22 dpp).

The catalysed reaction is L-seryl-[protein] + ATP = O-phospho-L-seryl-[protein] + ADP + H(+). The enzyme catalyses L-threonyl-[protein] + ATP = O-phospho-L-threonyl-[protein] + ADP + H(+). Its function is as follows. May play a role in sperm motility, especially in the regulation of flagellar function. The sequence is that of Sperm motility kinase 2A (Smok2a) from Mus musculus (Mouse).